The sequence spans 1021 residues: MFNLRTCASKLRPLTASQTIRSLKHNRPAAPRTFQQFRCLSTPVAAEPFLSGTNSNYVEEMYYAWLENPKSVHKSWDIFFRNANAGASPGAAYQSPPSLGSSLSTLTQAQSLLHSQPNVDKLVEDHLAVQSLIRAYQIRGHHVAQLDPLGILDADLDSCVPADIVTSSDKLGFYGLQESDLDKVFHLPTTTFIGGNEMALPLREIIRRLENAYCQHIGVEFMFINDLEQCQWIRQKFEAPGIMQFNNEEKRTLLARLVRSTRFEEFLHRKWSSEKRFGLEGCEVLIPALKTIIDKSSGNGVDYVIMGMPHRGRLNVLANVIRKELEQIFCQFDSKLEATDEGSGDVKYHLGMYHRRINRVTDRNITLSLVANPSHLEAADPVVQGKTKAEQFYCGDTEGKKVMAILLHGDAAFAGQGIVYETFHLSDLPSHTTHGTVHVVVNNQIGFTTDPRMARSSPYPTDVARVVNAPIFHVNADDPEAVMYVCNVAAEWRSTFHKDVVVDLVCYRRNGHNEMDEPMFTQPLMYKQIRKQKAVLQKYAETLISQGVVNQLEYEEEISKYDKICEEAFARSKDEKILHIKHWLDSPWPGFFTLDGQPRSMTCPSTGLTEEDLTHIGNVASSVPVEDFMIHGGLSRILKGRGEMVKNRTVDWALAEYMALGSLLKEGIHIRLSGQDVERGTFSHRHHVLHDQNVDKRTCIPMNHLWPNQAPYTVCNSSLSEYGVLGFELGFAMASPNALVLWEAQFGDFHNTAQCIIDQFVCPGQAKWVRQNGIVLLLPHGMEGMGPEHSSARPERFLQMCNDDPDVWPKASEDFAVGQLYDCNWIVVNCSTPANFFHVIRRQILLPFRKPLIVFTPKSLLRHPEARSSFDDMLPSTHFQRIIPEAGPASQNPEGVKRLIFCTGKVYYELTKERSGRDMEGDVAIARVEQLSPFPFDLVEKEVQKYPNADLVWCQEEHKNQGYYDYVKPRLRTTIHRTKPVWYAGRDPAAAPATGNKKTHLTELRRFLDTAFNLDAFKGHF.

The transit peptide at 1 to 40 directs the protein to the mitochondrion; that stretch reads MFNLRTCASKLRPLTASQTIRSLKHNRPAAPRTFQQFRCL. Ca(2+) contacts are provided by His142, Asp155, and Asp157. Thiamine diphosphate contacts are provided by Arg311, Asp410, Asn443, and Ile445. Residues Asp410, Asn443, and Ile445 each coordinate Mg(2+). Lys533 is covalently cross-linked (Glycyl lysine isopeptide (Lys-Gly) (interchain with G-Cter in ubiquitin)). Gln675 lines the thiamine diphosphate pocket.

Belongs to the alpha-ketoglutarate dehydrogenase family. In terms of assembly, homodimer. The 2-oxoglutarate dehydrogenase complex is composed of OGDH (2-oxoglutarate dehydrogenase; E1), DLST (dihydrolipoamide succinyltransferase; E2) and DLD (dihydrolipoamide dehydrogenase; E3). It contains multiple copies of the three enzymatic components (E1, E2 and E3). In the nucleus, the 2-oxoglutarate dehydrogenase complex associates with kat2a. Thiamine diphosphate serves as cofactor. The cofactor is Mg(2+). In terms of tissue distribution, expressed in the brain.

The protein resides in the mitochondrion. It is found in the nucleus. The enzyme catalyses N(6)-[(R)-lipoyl]-L-lysyl-[protein] + 2-oxoglutarate + H(+) = N(6)-[(R)-S(8)-succinyldihydrolipoyl]-L-lysyl-[protein] + CO2. Its activity is regulated as follows. Calcium ions and ADP stimulate, whereas ATP and NADH reduce catalytic activity. Functionally, 2-oxoglutarate dehydrogenase (E1o) component of the 2-oxoglutarate dehydrogenase complex (OGDHC). Participates in the first step, rate limiting for the overall conversion of 2-oxoglutarate to succinyl-CoA and CO(2) catalyzed by the whole OGDHC. Catalyzes the irreversible decarboxylation of 2-oxoglutarate (alpha-ketoglutarate) via the thiamine diphosphate (ThDP) cofactor and subsequent transfer of the decarboxylated acyl intermediate on an oxidized dihydrolipoyl group that is covalently amidated to the E2 enzyme (dihydrolipoyllysine-residue succinyltransferase or DLST). Plays a key role in the Krebs (citric acid) cycle, which is a common pathway for oxidation of fuel molecules, including carbohydrates, fatty acids, and amino acids. Can catalyze the decarboxylation of 2-oxoadipate in vitro, but at a much lower rate than 2-oxoglutarate. Mainly active in the mitochondrion. A fraction of the 2-oxoglutarate dehydrogenase complex also localizes in the nucleus and is required for lysine succinylation of histones: associates with KAT2A on chromatin and provides succinyl-CoA to histone succinyltransferase KAT2A. In Xenopus laevis (African clawed frog), this protein is 2-oxoglutarate dehydrogenase complex component E1 (ogdh).